An 808-amino-acid polypeptide reads, in one-letter code: Na(+)/H(+) antiporter 2 (808 aa).

9 helical membrane-spanning segments follow: residues 12 to 32 (HVAYSCVGIFSSIFSLVSLFV), 36 to 56 (LYIGESMVASIFGLIVGPHCL), 70 to 90 (ITLEISRILLCLQVFAVSVEL), 105 to 125 (LLVPVMTSGWLVIALFVWILV), 128 to 148 (LNFPASLLMGACITATDPVLA), 174 to 194 (CNDGLAIPFVFLSLDLLLYPG), 203 to 223 (WICVTILWECIFGSILGCIIG), 244 to 264 (FLAFYLILALTCAGFGSMLGV), and 267 to 287 (LLVSFFAGTAFAWDGWFAAKT). The N-linked (GlcNAc...) asparagine glycan is linked to N291. 5 helical membrane-spanning segments follow: residues 294-314 (NVIDVLLNYAYFVYLGSILPW), 319-339 (NPDIGLDVWRLILLSLVVIFL), 361-381 (AMFIGHFGPIGVGAVFAAITS), 409-429 (VMACIWPITCFSIMTSVIVHG), and 432-452 (VAVIMLGRYLSTVTLMALPTG). Disordered regions lie at residues 478–499 (QRLDKEPSLSPGQIGGRTSGMV) and 541–562 (HASTNDSHGTTTANLGTSNGRA). Residues 542–561 (ASTNDSHGTTTANLGTSNGR) show a composition bias toward polar residues. N-linked (GlcNAc...) asparagine glycans are attached at residues N545 and N602. The disordered stretch occupies residues 774–808 (LHSEDEMADDEAESENDMDYEDSDGPASRFKDHAD). Over residues 779 to 797 (EMADDEAESENDMDYEDSD) the composition is skewed to acidic residues.

It belongs to the fungal Na(+)/H(+) exchanger family.

Its subcellular location is the membrane. Its function is as follows. Sodium export from cell, takes up external protons in exchange for internal sodium ions. Seems to be poorly expressed. The polypeptide is Na(+)/H(+) antiporter 2 (SOD22) (Zygosaccharomyces rouxii).